The following is a 1486-amino-acid chain: Chromosome partition protein MukB (1486 aa).

34 to 41 (GGNGAGKS) contacts ATP. Coiled-coil stretches lie at residues 326 to 418 (LEAD…QYNQ), 444 to 480 (LETF…QAYQ), and 509 to 603 (RHLA…RAPV). Residues 666-783 (PGGSEDQRLN…EVPLFGRAAR (118 aa)) form a flexible hinge region. Coiled coils occupy residues 835-923 (EAEI…AKLE), 977-1115 (EMLS…TAKA), and 1209-1266 (VEAI…QNVS).

It belongs to the SMC family. MukB subfamily. As to quaternary structure, homodimerization via its hinge domain. Binds to DNA via its C-terminal region. Interacts, and probably forms a ternary complex, with MukE and MukF via its C-terminal region. The complex formation is stimulated by calcium or magnesium. Interacts with tubulin-related protein FtsZ.

The protein resides in the cytoplasm. It localises to the nucleoid. Its function is as follows. Plays a central role in chromosome condensation, segregation and cell cycle progression. Functions as a homodimer, which is essential for chromosome partition. Involved in negative DNA supercoiling in vivo, and by this means organize and compact chromosomes. May achieve or facilitate chromosome segregation by condensation DNA from both sides of a centrally located replisome during cell division. The sequence is that of Chromosome partition protein MukB from Shigella boydii serotype 4 (strain Sb227).